The chain runs to 210 residues: Transcriptional regulator DauR (210 aa).

The protein belongs to the DauR family.

Functionally, dauR represses the dauBAR operon. The protein is Transcriptional regulator DauR of Pseudomonas aeruginosa (strain ATCC 15692 / DSM 22644 / CIP 104116 / JCM 14847 / LMG 12228 / 1C / PRS 101 / PAO1).